Here is a 249-residue protein sequence, read N- to C-terminus: Proteasome activator complex subunit 1 (249 aa).

Residues 60 to 102 are disordered; the sequence is PLDIPVPDPVKEKEKEERKKQQEKEDKDEKKKGEDEDKGPPCG. Over residues 68–98 the composition is skewed to basic and acidic residues; it reads PVKEKEKEERKKQQEKEDKDEKKKGEDEDKG.

The protein belongs to the PA28 family. As to quaternary structure, heterodimer of PSME1 and PSME2, which forms a hexameric ring. PSME1 can form homoheptamers.

Its function is as follows. Implicated in immunoproteasome assembly and required for efficient antigen processing. The PA28 activator complex enhances the generation of class I binding peptides by altering the cleavage pattern of the proteasome. The protein is Proteasome activator complex subunit 1 (PSME1) of Sus scrofa (Pig).